We begin with the raw amino-acid sequence, 237 residues long: Phosphoribosylaminoimidazole-succinocarboxamide synthase (237 aa).

This sequence belongs to the SAICAR synthetase family.

It catalyses the reaction 5-amino-1-(5-phospho-D-ribosyl)imidazole-4-carboxylate + L-aspartate + ATP = (2S)-2-[5-amino-1-(5-phospho-beta-D-ribosyl)imidazole-4-carboxamido]succinate + ADP + phosphate + 2 H(+). It participates in purine metabolism; IMP biosynthesis via de novo pathway; 5-amino-1-(5-phospho-D-ribosyl)imidazole-4-carboxamide from 5-amino-1-(5-phospho-D-ribosyl)imidazole-4-carboxylate: step 1/2. This chain is Phosphoribosylaminoimidazole-succinocarboxamide synthase, found in Deinococcus radiodurans (strain ATCC 13939 / DSM 20539 / JCM 16871 / CCUG 27074 / LMG 4051 / NBRC 15346 / NCIMB 9279 / VKM B-1422 / R1).